We begin with the raw amino-acid sequence, 720 residues long: F-box/LRR-repeat MAX2 homolog (720 aa).

The region spanning 14–60 (SSAILDLPEPLLLHILSFLTDVRSRHRAALACGRMRAAERATRSELS) is the F-box domain. 18 LRR repeats span residues 71–134 (LFLS…QNAF), 135–158 (IAAR…DPTT), 159–189 (LANL…PDGA), 190–218 (DLEP…DVVR), 219–247 (ALTT…FKSS), 248–279 (ELGP…VGDD), 280–316 (ALLS…ITVA), 317–344 (GLVA…EAAP), 345–372 (AMEA…KASW), 373–398 (LHLD…LTDA), 399–435 (SLAA…TLRP), 436–452 (TLKE…HTAE), 453–510 (CLTA…KCRY), 511–537 (MEFD…LLSP), 538–571 (LISA…PRTI), 572–606 (FGLS…GQMD), 607–644 (LSLW…SLTL), and 645–720 (PAVG…QIDD).

Associates to a SCF (SKP1-CUL1-F-box protein) E3 ubiquitin-protein ligase complex. Interacts with D14 in a strigolactone-dependent manner. Interacts with SKP1, SKP5 and SKP20. Expressed in leaves. Expressed in roots, culms, leaf blades, leaf sheaths, shoot bases and panicles.

The protein localises to the nucleus. Its function is as follows. Involved in strigolactone (SL) signaling. Required for responses to SLs and the establishment of arbuscular mycorrhiza symbiosis in rice. Strigolactone-dependent association of D3 with D14 and D53 (a repressor of SL signaling) triggers D53 ubiquitination and degradation. Controls tillering by suppressing axillary bud activity. Tiller is a specialized grain-bearing branch that is formed on the unelongated basal internode and grows independently of the mother stem (culm) by means of its own adventitious roots. In Oryza sativa subsp. japonica (Rice), this protein is F-box/LRR-repeat MAX2 homolog.